A 948-amino-acid polypeptide reads, in one-letter code: Bifunctional glutamine synthetase adenylyltransferase/adenylyl-removing enzyme (948 aa).

Residues 1-444 (MSLPSALLPT…VFATLIGEED (444 aa)) form an adenylyl removase region. Residues 452–948 (ARHFHELWDM…VIQAWQQWLG (497 aa)) are adenylyl transferase.

It belongs to the GlnE family. The cofactor is Mg(2+).

The catalysed reaction is [glutamine synthetase]-O(4)-(5'-adenylyl)-L-tyrosine + phosphate = [glutamine synthetase]-L-tyrosine + ADP. It catalyses the reaction [glutamine synthetase]-L-tyrosine + ATP = [glutamine synthetase]-O(4)-(5'-adenylyl)-L-tyrosine + diphosphate. In terms of biological role, involved in the regulation of glutamine synthetase GlnA, a key enzyme in the process to assimilate ammonia. When cellular nitrogen levels are high, the C-terminal adenylyl transferase (AT) inactivates GlnA by covalent transfer of an adenylyl group from ATP to specific tyrosine residue of GlnA, thus reducing its activity. Conversely, when nitrogen levels are low, the N-terminal adenylyl removase (AR) activates GlnA by removing the adenylyl group by phosphorolysis, increasing its activity. The regulatory region of GlnE binds the signal transduction protein PII (GlnB) which indicates the nitrogen status of the cell. In Vibrio cholerae serotype O1 (strain ATCC 39315 / El Tor Inaba N16961), this protein is Bifunctional glutamine synthetase adenylyltransferase/adenylyl-removing enzyme.